A 238-amino-acid polypeptide reads, in one-letter code: 3-dehydroquinate dehydratase (238 aa).

Residues 35–37 (ELR) and arginine 70 contribute to the 3-dehydroquinate site. The active-site Proton donor/acceptor is the histidine 133. Lysine 160 acts as the Schiff-base intermediate with substrate in catalysis. Positions 202 and 225 each coordinate 3-dehydroquinate.

The protein belongs to the type-I 3-dehydroquinase family. In terms of assembly, homodimer.

The enzyme catalyses 3-dehydroquinate = 3-dehydroshikimate + H2O. The protein operates within metabolic intermediate biosynthesis; chorismate biosynthesis; chorismate from D-erythrose 4-phosphate and phosphoenolpyruvate: step 3/7. Functionally, involved in the third step of the chorismate pathway, which leads to the biosynthesis of aromatic amino acids. Catalyzes the cis-dehydration of 3-dehydroquinate (DHQ) and introduces the first double bond of the aromatic ring to yield 3-dehydroshikimate. This Staphylococcus aureus (strain MRSA252) protein is 3-dehydroquinate dehydratase.